Reading from the N-terminus, the 286-residue chain is Protease HtpX homolog (286 aa).

Helical transmembrane passes span T7–G27 and S29–S49. H131 serves as a coordination point for Zn(2+). Residue E132 is part of the active site. H135 is a binding site for Zn(2+). The next 2 membrane-spanning stretches (helical) occupy residues I146–G166 and I177–I197. E202 lines the Zn(2+) pocket.

Belongs to the peptidase M48B family. The cofactor is Zn(2+).

It is found in the cell inner membrane. The protein is Protease HtpX homolog of Ralstonia pickettii (strain 12J).